Consider the following 344-residue polypeptide: Phenylalanine--tRNA ligase alpha subunit (344 aa).

Glutamate 256 is a binding site for Mg(2+).

The protein belongs to the class-II aminoacyl-tRNA synthetase family. Phe-tRNA synthetase alpha subunit type 1 subfamily. As to quaternary structure, tetramer of two alpha and two beta subunits. Mg(2+) serves as cofactor.

Its subcellular location is the cytoplasm. The enzyme catalyses tRNA(Phe) + L-phenylalanine + ATP = L-phenylalanyl-tRNA(Phe) + AMP + diphosphate + H(+). In Bacillus anthracis (strain CDC 684 / NRRL 3495), this protein is Phenylalanine--tRNA ligase alpha subunit.